Reading from the N-terminus, the 373-residue chain is Dual-specificity RNA methyltransferase RlmN (373 aa).

The active-site Proton acceptor is the glutamate 94. The 240-residue stretch at 100–339 (EADRATLCVS…VIVRKTRGDD (240 aa)) folds into the Radical SAM core domain. Cysteine 107 and cysteine 344 are oxidised to a cystine. Positions 114, 118, and 121 each coordinate [4Fe-4S] cluster. Residues 168–169 (GE), serine 200, 222–224 (SLH), and asparagine 301 contribute to the S-adenosyl-L-methionine site. Cysteine 344 (S-methylcysteine intermediate) is an active-site residue.

It belongs to the radical SAM superfamily. RlmN family. The cofactor is [4Fe-4S] cluster.

It localises to the cytoplasm. The catalysed reaction is adenosine(2503) in 23S rRNA + 2 reduced [2Fe-2S]-[ferredoxin] + 2 S-adenosyl-L-methionine = 2-methyladenosine(2503) in 23S rRNA + 5'-deoxyadenosine + L-methionine + 2 oxidized [2Fe-2S]-[ferredoxin] + S-adenosyl-L-homocysteine. It carries out the reaction adenosine(37) in tRNA + 2 reduced [2Fe-2S]-[ferredoxin] + 2 S-adenosyl-L-methionine = 2-methyladenosine(37) in tRNA + 5'-deoxyadenosine + L-methionine + 2 oxidized [2Fe-2S]-[ferredoxin] + S-adenosyl-L-homocysteine. Specifically methylates position 2 of adenine 2503 in 23S rRNA and position 2 of adenine 37 in tRNAs. m2A2503 modification seems to play a crucial role in the proofreading step occurring at the peptidyl transferase center and thus would serve to optimize ribosomal fidelity. In Tolumonas auensis (strain DSM 9187 / NBRC 110442 / TA 4), this protein is Dual-specificity RNA methyltransferase RlmN.